We begin with the raw amino-acid sequence, 190 residues long: MEALHQKIREQGIVLSDQVLKVDAFLNHQIDPALMKLIGDEFATLFKDSGITKIVTIEASGIAPAIMTGLNLGVPVIFARKQQSLTLTENLLSATVYSFTKKTESTVAISPRHLTSSDRVLIIDDFLANGKASQALISIIKQAGATVAGLGIVIEKSFQGGRAELDSQGYRVESLARVKSLKDGVVTFIE.

Leucine 20 and asparagine 27 together coordinate xanthine. 128–132 (ANGKA) contributes to the 5-phospho-alpha-D-ribose 1-diphosphate binding site. Xanthine is bound at residue lysine 156.

It belongs to the purine/pyrimidine phosphoribosyltransferase family. Xpt subfamily. As to quaternary structure, homodimer.

Its subcellular location is the cytoplasm. It carries out the reaction XMP + diphosphate = xanthine + 5-phospho-alpha-D-ribose 1-diphosphate. The protein operates within purine metabolism; XMP biosynthesis via salvage pathway; XMP from xanthine: step 1/1. Its function is as follows. Converts the preformed base xanthine, a product of nucleic acid breakdown, to xanthosine 5'-monophosphate (XMP), so it can be reused for RNA or DNA synthesis. The sequence is that of Xanthine phosphoribosyltransferase from Pseudomonas fluorescens (strain Pf0-1).